The following is a 214-amino-acid chain: Adenylate kinase (214 aa).

14–19 is a binding site for ATP; that stretch reads GSGKGT. Residues 34–63 are NMP; the sequence is SSGDLFRSAIKSATPLGSKAAEYINKGLLV. AMP contacts are provided by residues Ser-35, Arg-40, 61–63, 89–92, and Gln-96; these read LLV and GFPR. The segment at 130-163 is LID; that stretch reads SRFICPACNYVYNQSQGFKECPTCHVALIRRSDD. Arg-131 serves as a coordination point for ATP. Cys-134 and Cys-137 together coordinate Zn(2+). Position 140-141 (140-141) interacts with ATP; the sequence is VY. Residues Cys-150 and Cys-153 each contribute to the Zn(2+) site. AMP is bound by residues Arg-160 and Arg-171. Thr-199 contacts ATP.

The protein belongs to the adenylate kinase family. In terms of assembly, monomer.

It is found in the cytoplasm. It carries out the reaction AMP + ATP = 2 ADP. Its pathway is purine metabolism; AMP biosynthesis via salvage pathway; AMP from ADP: step 1/1. Catalyzes the reversible transfer of the terminal phosphate group between ATP and AMP. Plays an important role in cellular energy homeostasis and in adenine nucleotide metabolism. This Chlamydia caviae (strain ATCC VR-813 / DSM 19441 / 03DC25 / GPIC) (Chlamydophila caviae) protein is Adenylate kinase.